The primary structure comprises 510 residues: Hepatic triacylglycerol lipase (510 aa).

The N-terminal stretch at 1–21 is a signal peptide; sequence MGNPLQISIFLVFCIFIQSSA. A glycan (N-linked (GlcNAc...) asparagine) is linked at Asn79. Ser169 functions as the Nucleophile in the catalytic mechanism. The active-site Charge relay system is the Asp195. An essential for determining substrate specificity region spans residues 255–278; it reads CHFLELYKHIAEHGLNAITQTIKC. The Charge relay system role is filled by His280. Positions 353–487 constitute a PLAT domain; the sequence is YHYQFKIQFI…HPSQEKVFVN (135 aa). Asn398 carries N-linked (GlcNAc...) asparagine glycosylation.

This sequence belongs to the AB hydrolase superfamily. Lipase family. Homodimer.

The protein localises to the secreted. The catalysed reaction is a triacylglycerol + H2O = a diacylglycerol + a fatty acid + H(+). It carries out the reaction a 1-acyl-sn-glycero-3-phosphocholine + H2O = sn-glycerol 3-phosphocholine + a fatty acid + H(+). It catalyses the reaction a 1,2-diacyl-sn-glycero-3-phosphocholine + H2O = a 2-acyl-sn-glycero-3-phosphocholine + a fatty acid + H(+). The enzyme catalyses 1,2,3-tri-(9Z-octadecenoyl)-glycerol + H2O = di-(9Z)-octadecenoylglycerol + (9Z)-octadecenoate + H(+). The catalysed reaction is 1,2-di-(9Z-octadecenoyl)-sn-glycero-3-phosphocholine + H2O = (9Z-octadecenoyl)-sn-glycero-3-phosphocholine + (9Z)-octadecenoate + H(+). It carries out the reaction 1,2,3-tributanoylglycerol + H2O = dibutanoylglycerol + butanoate + H(+). It catalyses the reaction 1,2-dihexadecanoyl-sn-glycero-3-phosphocholine + H2O = hexadecanoyl-sn-glycero-3-phosphocholine + hexadecanoate + H(+). The enzyme catalyses 1,2-di-(9Z-octadecenoyl)-sn-glycerol + H2O = 2-(9Z-octadecenoyl)-glycerol + (9Z)-octadecenoate + H(+). The catalysed reaction is 1,2,3-tri-(9Z-octadecenoyl)-glycerol + H2O = 2,3-di-(9Z)-octadecenoyl-sn-glycerol + (9Z)-octadecenoate + H(+). It carries out the reaction 1-(9Z-octadecenoyl)-sn-glycero-3-phospho-L-serine + H2O = sn-glycero-3-phospho-L-serine + (9Z)-octadecenoate + H(+). It catalyses the reaction 1-hexadecanoyl-sn-glycero-3-phosphocholine + H2O = sn-glycerol 3-phosphocholine + hexadecanoate + H(+). The enzyme catalyses 1,3-di-(9Z-octadecenoyl)-glycerol + H2O = 3-(9Z-octadecenoyl)-sn-glycerol + (9Z)-octadecenoate + H(+). Its function is as follows. Catalyzes the hydrolysis of triglycerides and phospholipids present in circulating plasma lipoproteins, including chylomicrons, intermediate density lipoproteins (IDL), low density lipoproteins (LDL) of large size and high density lipoproteins (HDL), releasing free fatty acids (FFA) and smaller lipoprotein particles. Also exhibits lysophospholipase activity. Can hydrolyze both neutral lipid and phospholipid substrates but shows a greater binding affinity for neutral lipid substrates than phospholipid substrates. In native LDL, preferentially hydrolyzes the phosphatidylcholine species containing polyunsaturated fatty acids at sn-2 position. This Mus musculus (Mouse) protein is Hepatic triacylglycerol lipase (Lipc).